Here is a 330-residue protein sequence, read N- to C-terminus: Short chain dehydrogenase yanD (330 aa).

NADP(+)-binding residues include K57, D86, N113, Y204, and K208. Y204 serves as the catalytic Proton donor. K208 serves as the catalytic Lowers pKa of active site Tyr.

It belongs to the short-chain dehydrogenases/reductases (SDR) family.

It functions in the pathway secondary metabolite biosynthesis; terpenoid biosynthesis. Short chain dehydrogenase; part of the gene cluster that mediates the biosynthesis of yanuthone D, a fungal isoprenoid epoxycyclohexenone that acts as an antibiotic against fungi and bacteria. The first step of the pathway is the synthesis of 6-methylsalicylic acid (6-MSA) by the polyketide synthase yanA. 6-MSA is then converted to m-cresol by the decarboxylase yanB. The cytochrome P450 monooxygenase yanC then catalyzes the oxidation of m-cresol to toluquinol. Epoxidation of toluquinol is then performed by the short chain dehydrogenase yanD, with the help of yanE, and a further prenylation by yanG leads to 7-deacetoxyyanuthone A. The next step is the hydroxylation of C-22 of 7-deacetoxyyanuthone A by the cytochrome P450 monooxygenase yanH to yield 22-deacetylyanuthone A. O-Mevalon transferase yanI then attaches mevalon to the hydroxyl group of 22-deacetylyanuthone A to produce yanuthone E. Finally, the FAD-dependent monooxygenase yanF oxidizes the hydroxyl group at C15 of yanuthone E to form yanuthone D. Furthermore, several branching points in the pathway lead to the production of yanuthones F and G from 7-deacetoxyyanuthone A; yanuthones H and I from 22-deacetylyanuthone A; and yanuthone J from yanuthone E. YanD is also involved in the synthesis of yanuthone X1 which does not have 6-methylsalicylic acid (6-MSA) as precursor. In Aspergillus niger (strain ATCC 1015 / CBS 113.46 / FGSC A1144 / LSHB Ac4 / NCTC 3858a / NRRL 328 / USDA 3528.7), this protein is Short chain dehydrogenase yanD.